A 99-amino-acid polypeptide reads, in one-letter code: Large ribosomal subunit protein uL23 (99 aa).

Belongs to the universal ribosomal protein uL23 family. As to quaternary structure, part of the 50S ribosomal subunit. Contacts protein L29, and trigger factor when it is bound to the ribosome.

One of the early assembly proteins it binds 23S rRNA. One of the proteins that surrounds the polypeptide exit tunnel on the outside of the ribosome. Forms the main docking site for trigger factor binding to the ribosome. The polypeptide is Large ribosomal subunit protein uL23 (Pseudomonas fluorescens (strain SBW25)).